The chain runs to 286 residues: MKITDHKLSEGIALTFRVPEGNIKHPLIILCHGFCGIRNVLLPCFANAFTEAGFATITFDYRGFGESDGERGRLVPAMQTEDIISVINWAEKQECIDNQRIGLWGTSLGGGHVFSARAQDQRVKCIVSQLAFADGDVLVTGEMNESERASFLSTLNKMAEKKKNTGKEMFVGVTRVLSDNESKVFFEKVKGQYPEMDIKIPFLTVMETLQYKPAESAAKVQCPVLIVIAGQDSVNPPEQGKALYDAVASGTKELYEEADACHYDIYEGAFFERVAAVQTQWFKKHL.

The region spanning Pro-26–Gly-268 is the AB hydrolase-1 domain.

This sequence to E.coli YcjY.

This is an uncharacterized protein from Escherichia coli.